The chain runs to 215 residues: Octanoyltransferase (215 aa).

Residues 42–215 form the BPL/LPL catalytic domain; that stretch reads QNTPDEIWLL…AEKLKARLKQ (174 aa). Residues 81–88, 148–150, and 161–163 each bind substrate; these read RGGQITYH, ALG, and GLA. The active-site Acyl-thioester intermediate is the Cys179.

It belongs to the LipB family.

The protein resides in the cytoplasm. The enzyme catalyses octanoyl-[ACP] + L-lysyl-[protein] = N(6)-octanoyl-L-lysyl-[protein] + holo-[ACP] + H(+). It functions in the pathway protein modification; protein lipoylation via endogenous pathway; protein N(6)-(lipoyl)lysine from octanoyl-[acyl-carrier-protein]: step 1/2. In terms of biological role, catalyzes the transfer of endogenously produced octanoic acid from octanoyl-acyl-carrier-protein onto the lipoyl domains of lipoate-dependent enzymes. Lipoyl-ACP can also act as a substrate although octanoyl-ACP is likely to be the physiological substrate. The protein is Octanoyltransferase of Nitrosospira multiformis (strain ATCC 25196 / NCIMB 11849 / C 71).